Consider the following 257-residue polypeptide: Aspartate/glutamate leucyltransferase (257 aa).

The protein belongs to the R-transferase family. Bpt subfamily.

The protein resides in the cytoplasm. The catalysed reaction is N-terminal L-glutamyl-[protein] + L-leucyl-tRNA(Leu) = N-terminal L-leucyl-L-glutamyl-[protein] + tRNA(Leu) + H(+). It catalyses the reaction N-terminal L-aspartyl-[protein] + L-leucyl-tRNA(Leu) = N-terminal L-leucyl-L-aspartyl-[protein] + tRNA(Leu) + H(+). Functions in the N-end rule pathway of protein degradation where it conjugates Leu from its aminoacyl-tRNA to the N-termini of proteins containing an N-terminal aspartate or glutamate. This Rhodopseudomonas palustris (strain HaA2) protein is Aspartate/glutamate leucyltransferase.